The following is a 277-amino-acid chain: Ribonuclease HII (277 aa).

An RNase H type-2 domain is found at 72 to 260; sequence EYIAGIDEAG…IKEMIEMKKE (189 aa). The a divalent metal cation site is built by Asp78, Glu79, and Asp170.

Belongs to the RNase HII family. Requires Mn(2+) as cofactor. The cofactor is Mg(2+).

The protein resides in the cytoplasm. It carries out the reaction Endonucleolytic cleavage to 5'-phosphomonoester.. Functionally, endonuclease that specifically degrades the RNA of RNA-DNA hybrids. The sequence is that of Ribonuclease HII from Geobacillus sp. (strain WCH70).